The following is a 95-amino-acid chain: Small ribosomal subunit protein bS6 (95 aa).

This sequence belongs to the bacterial ribosomal protein bS6 family.

Its function is as follows. Binds together with bS18 to 16S ribosomal RNA. The polypeptide is Small ribosomal subunit protein bS6 (Corynebacterium diphtheriae (strain ATCC 700971 / NCTC 13129 / Biotype gravis)).